The primary structure comprises 121 residues: Small ribosomal subunit protein uS13 (121 aa).

The segment at 94 to 121 is disordered; sequence RGLPVRGQSTKNNARTRKGPKRTVGAKR. The segment covering 107–121 has biased composition (basic residues); that stretch reads ARTRKGPKRTVGAKR.

The protein belongs to the universal ribosomal protein uS13 family. Part of the 30S ribosomal subunit. Forms a loose heterodimer with protein S19. Forms two bridges to the 50S subunit in the 70S ribosome.

In terms of biological role, located at the top of the head of the 30S subunit, it contacts several helices of the 16S rRNA. In the 70S ribosome it contacts the 23S rRNA (bridge B1a) and protein L5 of the 50S subunit (bridge B1b), connecting the 2 subunits; these bridges are implicated in subunit movement. Contacts the tRNAs in the A and P-sites. This Natranaerobius thermophilus (strain ATCC BAA-1301 / DSM 18059 / JW/NM-WN-LF) protein is Small ribosomal subunit protein uS13.